Reading from the N-terminus, the 556-residue chain is MGFWILAILTILMYSTAAKFSKQSWGLENEALIVRCPRQGKPSYTVDWYYSQTNKSIPTQERNRVFASGQLLKFLPAAVADSGIYTCIVRSPTFNRTGYANVTIYKKQSDCNVPDYLMYSTVSGSEKNSKIYCPTIDLYNWTAPLEWFKNCQALQGSRYRAHKSFLVIDNVMTEDAGDYTCKFIHNENGANYSVTATRSFTVKDEQGFSLFPVIGAPAQNEIKEVEIGKNANLTCSACFGKGTQFLAAVLWQLNGTKITDFGEPRIQQEEGQNQSFSNGLACLDMVLRIADVKEEDLLLQYDCLALNLHGLRRHTVRLSRKNPIDHHSIYCIIAVCSVFLMLINVLVIILKMFWIEATLLWRDIAKPYKTRNDGKLYDAYVVYPRNYKSSTDGASRVEHFVHQILPDVLENKCGYTLCIYGRDMLPGEDVVTAVETNIRKSRRHIFILTPQITHNKEFAYEQEVALHCALIQNDAKVILIEMEALSELDMLQAEALQDSLQHLMKVQGTIKWREDHIANKRSLNSKFWKHVRYQMPVPSKIPRKASSLTPLAAQKQ.

The signal sequence occupies residues 1–18 (MGFWILAILTILMYSTAA). 2 consecutive Ig-like C2-type domains span residues 19–103 (KFSK…ANVT) and 114–197 (PDYL…VTAT). Over 19 to 328 (KFSKQSWGLE…SRKNPIDHHS (310 aa)) the chain is Extracellular. Residues cysteine 36 and cysteine 87 are joined by a disulfide bond. 5 N-linked (GlcNAc...) asparagine glycosylation sites follow: asparagine 54, asparagine 95, asparagine 101, asparagine 140, and asparagine 191. Cystine bridges form between cysteine 111–cysteine 151 and cysteine 133–cysteine 181. Residues 198-211 (RSFTVKDEQGFSLF) are flexible linker. The Ig-like C2-type 3 domain occupies 212–319 (PVIGAPAQNE…GLRRHTVRLS (108 aa)). N-linked (GlcNAc...) asparagine glycans are attached at residues asparagine 232, asparagine 254, and asparagine 273. Intrachain disulfides connect cysteine 235-cysteine 303 and cysteine 238-cysteine 282. Lysine 321 is covalently cross-linked (Glycyl lysine isopeptide (Lys-Gly) (interchain with G-Cter in ubiquitin)). Residues 329–349 (IYCIIAVCSVFLMLINVLVII) traverse the membrane as a helical segment. Residues 350–556 (LKMFWIEATL…SLTPLAAQKQ (207 aa)) are Cytoplasmic-facing. One can recognise a TIR domain in the interval 375–535 (KLYDAYVVYP…KFWKHVRYQM (161 aa)). The active site involves glutamate 461.

Belongs to the interleukin-1 receptor family. In terms of assembly, interacts with MYD88, IRAK1, IRAK4, and TRAF6. Bound to its ligand IL-33, interacts with IL1RAP to form the minimal interleukin-33 signaling complex with a 1:1:1 stoichiometry. Interacts with KIT (bound to KITLG/SCF). A mast cell-specific KITLG/SCF-induced interleukin-33 signaling complex contains IL1RL1, IL1RAP, KIT and MYD88. Interacts with TMED1. Post-translationally, ubiquitinated at Lys-321 in a FBXL19-mediated manner; leading to proteasomal degradation. Ubiquitination by TRAF6 via 'Lys-27'-linked polyubiquitination and deubiquitination by USP38 serves as a critical regulatory mechanism for fine-tuning IL1RL1-mediated inflammatory response. In terms of tissue distribution, highly expressed in kidney, lung, placenta, stomach, skeletal muscle, colon and small intestine. Isoform A is prevalently expressed in the lung, testis, placenta, stomach and colon. Isoform B is more abundant in the brain, kidney and the liver. Isoform C is not detected in brain, heart, liver, kidney and skeletal muscle. Expressed on T-cells in fibrotic liver; at protein level. Overexpressed in fibrotic and cirrhotic liver.

The protein localises to the cell membrane. The protein resides in the secreted. The enzyme catalyses NAD(+) + H2O = ADP-D-ribose + nicotinamide + H(+). Functionally, receptor for interleukin-33 (IL-33) which plays crucial roles in innate and adaptive immunity, contributing to tissue homeostasis and responses to environmental stresses together with coreceptor IL1RAP. Its stimulation recruits MYD88, IRAK1, IRAK4, and TRAF6, followed by phosphorylation of MAPK3/ERK1 and/or MAPK1/ERK2, MAPK14, and MAPK8. Possibly involved in helper T-cell function. Upon tissue injury, induces UCP2-dependent mitochondrial rewiring that attenuates the generation of reactive oxygen species and preserves the integrity of Krebs cycle required for persistent production of itaconate and subsequent GATA3-dependent differentiation of inflammation-resolving alternatively activated macrophages. Inhibits IL-33 signaling. This is Interleukin-1 receptor-like 1 (IL1RL1) from Homo sapiens (Human).